Consider the following 212-residue polypeptide: Protein YIPF5 homolog (212 aa).

The Cytoplasmic segment spans residues 1–79 (MNNNNSFNFI…KKIDSHIMDD (79 aa)). Residues 80–100 (TDLGGPILFGLLLGFSLLMSG) form a helical membrane-spanning segment. Residue lysine 101 is a topological domain, lumenal. Residues 102-122 (IQFGYIYGLGLIGCVSMYIVL) traverse the membrane as a helical segment. The Cytoplasmic portion of the chain corresponds to 123 to 128 (NLMSEK). The chain crosses the membrane as a helical span at residues 129 to 149 (GIDIYRVISVLGYCLLPMIFL). At 150–163 (SFTSLIININGMVG) the chain is on the lumenal side. The helical transmembrane segment at 164–186 (YILIGFAIVWSTYSASKMFVKVL) threads the bilayer. At 187–191 (SMIDQ) the chain is on the cytoplasmic side. A helical membrane pass occupies residues 192–212 (RILVAYPVGLLYTGFALITAF).

It belongs to the YIP1 family.

The protein localises to the endoplasmic reticulum membrane. Its subcellular location is the golgi apparatus. The protein resides in the cis-Golgi network membrane. Functionally, plays a role in transport between endoplasmic reticulum and Golgi. The protein is Protein YIPF5 homolog (yipf5) of Dictyostelium discoideum (Social amoeba).